The following is a 204-amino-acid chain: Ribosome maturation factor RimM (204 aa).

A PRC barrel domain is found at 117-192 (DEDEFFSADL…EVTIDPPDDL (76 aa)).

This sequence belongs to the RimM family. As to quaternary structure, binds ribosomal protein uS19.

The protein resides in the cytoplasm. Its function is as follows. An accessory protein needed during the final step in the assembly of 30S ribosomal subunit, possibly for assembly of the head region. Essential for efficient processing of 16S rRNA. May be needed both before and after RbfA during the maturation of 16S rRNA. It has affinity for free ribosomal 30S subunits but not for 70S ribosomes. The sequence is that of Ribosome maturation factor RimM from Methylobacterium nodulans (strain LMG 21967 / CNCM I-2342 / ORS 2060).